The primary structure comprises 260 residues: Imidazole glycerol phosphate synthase subunit HisF (260 aa).

Catalysis depends on residues Asp11 and Asp130.

Belongs to the HisA/HisF family. In terms of assembly, heterodimer of HisH and HisF.

The protein resides in the cytoplasm. It catalyses the reaction 5-[(5-phospho-1-deoxy-D-ribulos-1-ylimino)methylamino]-1-(5-phospho-beta-D-ribosyl)imidazole-4-carboxamide + L-glutamine = D-erythro-1-(imidazol-4-yl)glycerol 3-phosphate + 5-amino-1-(5-phospho-beta-D-ribosyl)imidazole-4-carboxamide + L-glutamate + H(+). The protein operates within amino-acid biosynthesis; L-histidine biosynthesis; L-histidine from 5-phospho-alpha-D-ribose 1-diphosphate: step 5/9. Functionally, IGPS catalyzes the conversion of PRFAR and glutamine to IGP, AICAR and glutamate. The HisF subunit catalyzes the cyclization activity that produces IGP and AICAR from PRFAR using the ammonia provided by the HisH subunit. The protein is Imidazole glycerol phosphate synthase subunit HisF of Endomicrobium trichonymphae.